A 383-amino-acid polypeptide reads, in one-letter code: uncharacterized protein (383 aa).

The protein belongs to the peptidase M20 family.

This is an uncharacterized protein from Staphylococcus aureus (strain N315).